The primary structure comprises 473 residues: Glutamine synthetase (473 aa).

A GS beta-grasp domain is found at 18 to 102; sequence NNIKWVDLQF…VLTKVFWGGG (85 aa). Residues 110 to 473 enclose the GS catalytic domain; the sequence is PRGIAEEAEK…PMEIYQYLDS (364 aa). The Mg(2+) site is built by Glu133 and Glu135. Residue Glu207 participates in ATP binding. Mg(2+)-binding residues include Glu212 and Glu220. L-glutamate contacts are provided by residues 264 to 265 and Gly265; that span reads NG. Residue His269 participates in Mg(2+) binding. ATP contacts are provided by residues 271-273 and Ser273; that span reads HFS. Residues Arg324, Glu330, and Arg342 each coordinate L-glutamate. Arg342, Arg347, and Lys357 together coordinate ATP. Glu362 provides a ligand contact to Mg(2+). Residue Arg364 coordinates L-glutamate.

The protein belongs to the glutamine synthetase family. Oligomer of 12 subunits arranged in the form of two hexagons. Mg(2+) is required as a cofactor. Requires Mn(2+) as cofactor.

The protein localises to the cytoplasm. It carries out the reaction L-glutamate + NH4(+) + ATP = L-glutamine + ADP + phosphate + H(+). Strongly inhibited by glycine and L-alanine. AMP at 10 mM displays a very weak inhibitory effect. The activity of this enzyme is not controlled by adenylation. Probably involved in nitrogen metabolism via ammonium assimilation. Catalyzes the ATP-dependent biosynthesis of glutamine from glutamate and ammonia. This Sulfolobus acidocaldarius (strain ATCC 33909 / DSM 639 / JCM 8929 / NBRC 15157 / NCIMB 11770) protein is Glutamine synthetase.